Here is a 776-residue protein sequence, read N- to C-terminus: MASLIYRQLLANSYAVDLSDEIDIIGSEKTQNVTINPGPFAQTGYAPVNWGPGETNDSTTIEPILDGPYPPTTFNPPTGYWMLLSPLEAGVVVEGTNNSDRWLATILIEPNVAAETRTYTLFGVQEQISISNTSSTKWKFVDLVKTSLTGTYSQYGPLLSDTKLYGAMKYSGRIYTYEGETPNAATGYYSTTNYDSVNMTAFCDFYIIPRSQESTCTNYINNGLPPIQNTRNVVPVSLASRAIISHRAQANEDIIVSQTSLWKEMQYNRDITIRFKFANAIVKSGGLGYKWSEISFKPANYQYTYVRDGEEVTAHTTCSVNGINDFSYNGGSLPTDFGISRYEVIKENSYVYVDYWDDSQAFRNMVYVRSLAADLNSVMCTGGSYNFALPVGQWPVMTGGAVSLHSAGVTLSTQFTDFVSLNSLRFRFRLSVEEPPFSIVRTRISGLYGLPAADPNNGNEYYEIAGRFSLISLVPSNDDYQTPIMNSVTVRQDLERQLGELREEFNALSQEIAMSQLVDLALLPLDMFSMFSGIKSTIDAAKSMATNVMKKFKKSSLASSVSTLTDSLSDAASSMTRNSSIRSVGSSISAWTDVSSQLTDASASTSTIATQTATISRRLRLKEIATQTEGMNFDDISAAVLKTKIDRSVQISPSTLPDIVTEASEKFIPNRAYRVINNDEVFEAGMDGRFFAYRVETFEEIPFDVQRFADLVTDSPVISAIIDFKTLKNLNDNYGITRDQAFNLLRSDPRVLREFINQDNPIIRNRIEQLILQCRL.

The interval leucine 65 to leucine 224 is spike head. Cysteine 203 and cysteine 216 are oxidised to a cystine. A spike body and stalk (antigen domain) region spans residues alanine 248 to aspartate 479. The DGE motif; interaction with ITGA2/ITGB1 heterodimer motif lies at aspartate 308–glutamate 310. The cysteines at positions 318 and 380 are disulfide-linked. Residues leucine 389–valine 409 are hydrophobic; possible role in virus entry into host cell. The YGL motif; interaction with ITGA4 motif lies at tyrosine 448–leucine 450. Residues isoleucine 484–glutamate 511 are a coiled coil. Residues glutamine 510 to leucine 776 are spike foot. Residues lysine 644 to aspartate 646 carry the KID motif; interaction with HSPA8 motif.

The protein belongs to the rotavirus VP4 family. In terms of assembly, homotrimer. VP4 adopts a dimeric appearance above the capsid surface, while forming a trimeric base anchored inside the capsid layer. Only hints of the third molecule are observed above the capsid surface. It probably performs a series of molecular rearrangements during viral entry. Prior to trypsin cleavage, it is flexible. The priming trypsin cleavage triggers its rearrangement into rigid spikes with approximate two-fold symmetry of their protruding parts. After an unknown second triggering event, cleaved VP4 may undergo another rearrangement, in which two VP5* subunits fold back on themselves and join a third subunit to form a tightly associated trimer, shaped like a folded umbrella. Interacts with VP6. Interacts with VP7. As to quaternary structure, homotrimer. The trimer is coiled-coil stabilized by its C-terminus, however, its N-terminus, known as antigen domain or 'body', seems to be flexible allowing it to self-associate either as a dimer or a trimer. In terms of processing, proteolytic cleavage by trypsin results in activation of VP4 functions and greatly increases infectivity. The penetration into the host cell is dependent on trypsin treatment of VP4. It produces two peptides, VP5* and VP8* that remain associated with the virion. Cleavage of VP4 by trypsin probably occurs in vivo in the lumen of the intestine prior to infection of enterocytes. Trypsin seems to be incorporated into the three-layered viral particles but remains inactive as long as the viral outer capsid is intact and would only be activated upon the solubilization of the latter.

It is found in the virion. It localises to the host rough endoplasmic reticulum. Its subcellular location is the host cell membrane. The protein localises to the host cytoplasm. The protein resides in the host cytoskeleton. It is found in the host endoplasmic reticulum-Golgi intermediate compartment. Its function is as follows. Spike-forming protein that mediates virion attachment to the host epithelial cell receptors and plays a major role in cell penetration, determination of host range restriction and virulence. Rotavirus attachment and entry into the host cell probably involves multiple sequential contacts between the outer capsid proteins VP4 and VP7, and the cell receptors. It is subsequently lost, together with VP7, following virus entry into the host cell. Following entry into the host cell, low intracellular or intravesicular Ca(2+) concentration probably causes the calcium-stabilized VP7 trimers to dissociate from the virion. This step is probably necessary for the membrane-disrupting entry step and the release of VP4, which is locked onto the virion by VP7. During the virus exit from the host cell, VP4 seems to be required to target the newly formed virions to the host cell lipid rafts. Forms the spike 'foot' and 'body' and acts as a membrane permeabilization protein that mediates release of viral particles from endosomal compartments into the cytoplasm. During entry, the part of VP5* that protrudes from the virus folds back on itself and reorganizes from a local dimer to a trimer. This reorganization may be linked to membrane penetration by exposing VP5* hydrophobic region. In integrin-dependent strains, VP5* targets the integrin heterodimer ITGA2/ITGB1 for cell attachment. Functionally, forms the head of the spikes and mediates the recognition of specific host cell surface glycans. It is the viral hemagglutinin and an important target of neutralizing antibodies. In sialic acid-dependent strains, VP8* binds to host cell sialic acid, most probably a ganglioside, providing the initial contact. In some other strains, VP8* mediates the attachment to histo-blood group antigens (HBGAs) for viral entry. The chain is Outer capsid protein VP4 from Rotavirus A (isolate RVA/Monkey/United States/TUCH/2003/G3P[24]) (RV-A).